Here is a 417-residue protein sequence, read N- to C-terminus: Candidapepsin-4 (417 aa).

The signal sequence occupies residues 1–18; sequence MFLQNILSVLAFALLIDA. Positions 19 to 75 are cleaved as a propeptide — activation peptide; the sequence is APVKRSTGFVTLDFNVKRSLVDPKDPTVEVKRSPLFLDIEPTEIPVDDTGRNDVGKR. In terms of domain architecture, Peptidase A1 spans 89–403; it reads YSADITIGSN…DLDDRKISMA (315 aa). Aspartate 107 is a catalytic residue. A disulfide bridge connects residues cysteine 122 and cysteine 134. N-linked (GlcNAc...) asparagine glycosylation is present at asparagine 137. Aspartate 293 is a catalytic residue. Cysteine 331 and cysteine 369 are disulfide-bonded.

Belongs to the peptidase A1 family. O-glycosylated.

The protein localises to the secreted. The enzyme catalyses Preferential cleavage at the carboxyl of hydrophobic amino acids, but fails to cleave 15-Leu-|-Tyr-16, 16-Tyr-|-Leu-17 and 24-Phe-|-Phe-25 of insulin B chain. Activates trypsinogen, and degrades keratin.. This Candida albicans (strain WO-1) (Yeast) protein is Candidapepsin-4 (SAP4).